The chain runs to 852 residues: Genome polyprotein (852 aa).

2 consecutive short sequence motifs ((L)YPX(n)L motif) follow at residues 167-171 (YPHGL) and 200-205 (YPVWEL). The tract at residues 766-836 (MMSRIAAGDL…PRKMKGLFSQ (71 aa)) is involved in P1-2A pentamerization.

It belongs to the picornaviridae polyprotein family. Homodimer. Homomultimer; probably interacts with membranes in a multimeric form. Seems to assemble into amyloid-like fibers. As to quaternary structure, homopentamer. Homooligomer. In terms of assembly, interacts with capsid protein VP2. Interacts with capsid protein VP3. Interacts with capsid protein VP1. Interacts with capsid protein VP3. As to quaternary structure, interacts with capsid protein VP1. Interacts with capsid protein VP2. Specific enzymatic cleavages by viral protease in vivo yield a variety of precursors and mature proteins. Polyprotein processing intermediates are produced, such as P1-2A which is a functional precursor of the structural proteins, VP0 which is a VP4-VP2 precursor, VP1-2A precursor, 3ABC precursor which is a stable and catalytically active precursor of 3A, 3B and 3C proteins, 3AB and 3CD precursors. The assembly signal 2A is removed from VP1-2A by a host protease, possibly host Cathepsin L. This cleavage occurs over a region of 3 amino-acids probably generating VP1 proteins with heterogeneous C-termini. Post-translationally, during virion maturation, immature virions are rendered infectious following cleavage of VP0 into VP4 and VP2. This maturation seems to be an autocatalytic event triggered by the presence of RNA in the capsid and is followed by a conformational change of the particle. In terms of processing, the assembly signal 2A is removed from VP1-2A by a host protease, possibly host Cathepsin L in naked virions. This cleavage does not occur in enveloped virions. This cleavage occurs over a region of 3 amino-acids probably generating VP1 proteins with heterogeneous C-termini. Viral protein genome-linked: VPg is uridylylated prior to priming replication into VPg-pUpU. Post-translationally, unlike other picornaviruses, does not seem to be myristoylated.

The protein localises to the virion. Its subcellular location is the host endosome. The protein resides in the host multivesicular body. It localises to the host membrane. Capsid proteins VP1, VP2, and VP3 form a closed capsid enclosing the viral positive strand RNA genome. All these proteins contain a beta-sheet structure called beta-barrel jelly roll. Together they form an icosahedral capsid (T=3) composed of 60 copies of each VP1, VP2, and VP3, with a diameter of approximately 300 Angstroms. VP1 is situated at the 12 fivefold axes, whereas VP2 and VP3 are located at the quasi-sixfold axes. The naked capsid interacts with the host receptor HAVCR1 to provide virion attachment to and probably entry into the target cell. Its function is as follows. VP0 precursor is a component of the immature procapsids. In terms of biological role, plays a role in the assembly of the 12 pentamers into an icosahedral structure. Has not been detected in mature virions, supposedly owing to its small size. Functionally, precursor component of immature procapsids that corresponds to an extended form of the structural protein VP1. After maturation, possibly by the host Cathepsin L, the assembly signal 2A is cleaved to give rise to the mature VP1 protein. Affects membrane integrity and causes an increase in membrane permeability. Its function is as follows. Functions as a viroporin. Affects membrane integrity and causes an increase in membrane permeability. Involved in host intracellular membrane rearrangements probably to give rise to the viral factories. Does not disrupt calcium homeostasis or glycoprotein trafficking. Antagonizes the innate immune response of the host by suppressing IFN-beta synthesis, which it achieves by interfering with the RIG-I/IFIH1 pathway. The polypeptide is Genome polyprotein (Cercopithecus hamlyni (Owl-faced monkey)).